Consider the following 66-residue polypeptide: MKIFFFIFAALILLAQIFQARTAIHRALICKRMEGHCEAECLTFEVKIGGCRAELAPFCCKNRKKH.

The N-terminal stretch at 1–22 (MKIFFFIFAALILLAQIFQART) is a signal peptide. Disulfide bonds link Cys37–Cys51 and Cys41–Cys60.

It belongs to the beta-defensin family.

Its subcellular location is the secreted. Has antibacterial activity. This is Beta-defensin 107A (DEFB107A) from Hylobates lar (Lar gibbon).